The chain runs to 669 residues: PDF receptor (669 aa).

The Extracellular segment spans residues 1-244 (MTLLSNILDC…DIARRTRTLE (244 aa)). The segment at 24-52 (RQSGSSGPSPSAPTAGTFESKSMLEPTSS) is disordered. Over residues 26–40 (SGSSGPSPSAPTAGT) the composition is skewed to low complexity. 6 N-linked (GlcNAc...) asparagine glycosylation sites follow: N111, N117, N130, N137, N148, and N198. The chain crosses the membrane as a helical span at residues 245–265 (IVGLCLSLFALIVSLLIFCTF). Residues 266-274 (RSLRNNRTK) lie on the Cytoplasmic side of the membrane. Residues 275-295 (IHKNLFVAMVLQVIIRLTLYL) traverse the membrane as a helical segment. At 296 to 334 (DQFRRGNKEAATNTSLSVIENTPYLCEASYVLLEYARTA) the chain is on the extracellular side. N308 carries N-linked (GlcNAc...) asparagine glycosylation. Residues 335–355 (MFMWMFIEGLYLHNMVTVAVF) form a helical membrane-spanning segment. The Cytoplasmic portion of the chain corresponds to 356–366 (QGSFPLKFFSR). Residues 367-387 (LGWCVPILMTTVWARCTVMYM) form a helical membrane-spanning segment. Residues 388–411 (DTSLGECLWNYNLTPYYWILEGPR) lie on the Extracellular side of the membrane. A helical transmembrane segment spans residues 412–432 (LAVILLNFCFLVNIIRVLVMK). The Cytoplasmic portion of the chain corresponds to 433–449 (LRQSQASDIEQTRKAVR). Residues 450–470 (AAIVLLPLLGITNLLHQLAPL) form a helical membrane-spanning segment. Residues 471-480 (KTATNFAVWS) are Extracellular-facing. The helical transmembrane segment at 481-501 (YGTHFLTSFQGFFIALIYCFL) threads the bilayer. The Cytoplasmic portion of the chain corresponds to 502–669 (NGEVRAVLLK…ESVVFELSEQ (168 aa)). Disordered regions lie at residues 536 to 573 (AYNT…KPSS) and 590 to 614 (PRLQ…AEPD). The span at 595–609 (KAREKGKDRVEKTDA) shows a compositional bias: basic and acidic residues.

This sequence belongs to the G-protein coupled receptor 2 family. Mainly present in clock neurons of the brain. Localizes in all 4 s-LNv neurons, 1 LNd neuron, 7 DN1 neurons, and 1 DN3 neuron. In addition to the clock neurons, it is also present in approximately 13 pairs of neurons along the ventral nerve cord in third instar larvae, which do not overlap with dopaminergic or serotonergic neurons. Not present in DN2 neurons (at protein level).

It is found in the cell membrane. Functionally, receptor for PDF, a neuropeptide controlling circadian behavioral rhythms. Probably regulates circadian behavioral rhythms through coordination of activities of clock neurons. PDF-binding results in the elevation of cAMP synthesis. Plays a role in sleep regulation and regulates the state transition from sleep to wake. This Drosophila melanogaster (Fruit fly) protein is PDF receptor.